A 199-amino-acid chain; its full sequence is Probable GTP-binding protein EngB (199 aa).

Residues 25–199 (IGMEVAFVGY…LKRVLNNWLR (175 aa)) enclose the EngB-type G domain. Positions 40 and 62 each coordinate Mg(2+).

Belongs to the TRAFAC class TrmE-Era-EngA-EngB-Septin-like GTPase superfamily. EngB GTPase family. Requires Mg(2+) as cofactor.

Necessary for normal cell division and for the maintenance of normal septation. This is Probable GTP-binding protein EngB from Blochmanniella pennsylvanica (strain BPEN).